The following is a 200-amino-acid chain: Serine/threonine-protein kinase mos (200 aa).

The Protein kinase domain occupies 2-200 (LCLLQPLGSG…ELLKGERVTA (199 aa)). Residues 8–16 (LGSGGFGSV) and K29 contribute to the ATP site. The active-site Proton acceptor is the D143.

It belongs to the protein kinase superfamily. Ser/Thr protein kinase family.

It carries out the reaction L-seryl-[protein] + ATP = O-phospho-L-seryl-[protein] + ADP + H(+). It catalyses the reaction L-threonyl-[protein] + ATP = O-phospho-L-threonyl-[protein] + ADP + H(+). This Vultur gryphus (Andean condor) protein is Serine/threonine-protein kinase mos (MOS).